The following is a 26-amino-acid chain: Conotoxin reg6(gamma) (26 aa).

Residues 1-12 show a composition bias toward acidic residues; that stretch reads RVLEPGXEDPDV. Residues 1 to 26 are disordered; the sequence is RVLEPGXEDPDVGEPAGEYEHHLLEX. Glutamate 4 carries the 4-carboxyglutamate modification. At proline 5 the chain carries 4-hydroxyproline. Residue glutamate 8 is modified to 4-carboxyglutamate. Proline 10 carries the 4-hydroxyproline modification. At glutamate 14 the chain carries 4-carboxyglutamate. 4-hydroxyproline is present on proline 15. 4-carboxyglutamate occurs at positions 18, 20, and 25.

Expressed by the venom duct.

The protein resides in the secreted. The protein is Conotoxin reg6(gamma) of Conus regius (Crown cone).